Consider the following 453-residue polypeptide: Exopolyphosphatase PRUNE1 (453 aa).

Met-1 carries the post-translational modification N-acetylmethionine. The Mn(2+) site is built by Asp-28, Asp-30, Asp-106, and Asp-179. The DHH motif motif lies at 106–108 (DHH). Residues 393-420 (SLLSGLSQDEEEPPLPPTPMNSLVDECP) are essential for homodimerization. The disordered stretch occupies residues 396–419 (SGLSQDEEEPPLPPTPMNSLVDEC). Phosphoserine is present on Ser-399. A Phosphothreonine modification is found at Thr-410. Ser-414 carries the post-translational modification Phosphoserine.

Belongs to the PPase class C family. Prune subfamily. Homooligomer. Able to homodimerize via its C-terminal domain. Interacts with NME1. Interacts with GSK3; at focal adhesion complexes where paxillin and vinculin are colocalized. It depends on Mn(2+) as a cofactor.

It is found in the cytoplasm. The protein localises to the nucleus. Its subcellular location is the cell junction. It localises to the focal adhesion. The catalysed reaction is diphosphate + H2O = 2 phosphate + H(+). With respect to regulation, activated by magnesium ions and inhibited by manganese ions. Inhibited by dipyridamole, moderately sensitive to IBMX and inhibited by vinpocetine. Phosphodiesterase (PDE) that has higher activity toward cAMP than cGMP, as substrate. Plays a role in cell proliferation, is able to induce cell motility and acts as a negative regulator of NME1. The sequence is that of Exopolyphosphatase PRUNE1 (PRUNE1) from Bos taurus (Bovine).